Reading from the N-terminus, the 132-residue chain is Small ribosomal subunit protein uS8 (132 aa).

It belongs to the universal ribosomal protein uS8 family. Part of the 30S ribosomal subunit. Contacts proteins S5 and S12.

Its function is as follows. One of the primary rRNA binding proteins, it binds directly to 16S rRNA central domain where it helps coordinate assembly of the platform of the 30S subunit. The chain is Small ribosomal subunit protein uS8 from Anaeromyxobacter sp. (strain Fw109-5).